We begin with the raw amino-acid sequence, 134 residues long: Large ribosomal subunit protein uL24 (134 aa).

This sequence belongs to the universal ribosomal protein uL24 family. In terms of assembly, part of the 50S ribosomal subunit.

In terms of biological role, one of two assembly initiator proteins, it binds directly to the 5'-end of the 23S rRNA, where it nucleates assembly of the 50S subunit. Its function is as follows. Located at the polypeptide exit tunnel on the outside of the subunit. The sequence is that of Large ribosomal subunit protein uL24 from Sulfolobus acidocaldarius (strain ATCC 33909 / DSM 639 / JCM 8929 / NBRC 15157 / NCIMB 11770).